Here is a 484-residue protein sequence, read N- to C-terminus: MGSNDLINEAYDDSEVVGEERESKSAWMKRWYQLLTSPLDLQLVINEKLEMINWDAYAKSLAKPLGNFLTILFFIIRLLQDNLIKPNYYKLNVKSGAFDLSKSNKLKEFDYLWEISSSFQNSNQFYAFQSWYFVTLRFLNNLFRFTIFILLSLNLYVSCKFMFGYFKTYNLFHLKKEFNSPNLTKHNLKDLSKEYYEDIYKQSLWSMLKHFFRGSRDDGPHVNQNEVEIFFQLRKWIPTNFIINLFVSFSPTAIVFLSFSDVSFTSAIAIVFHQYILDYIITKRFQRSVDDDLILSSAALQEYEDKHIMARINQCSNIDTLSSAMGTRSKTPRIFTTHSLCGEEIREVYNYEKREFEALPKMTESVPGSRETRIKDYGGISQVSDNQSHPIGFHYSPRMSPYYRDKVLDNNLAQSSSNENLEKGGAFLPNQDQNRPSKSLSPLRKTPLSARQKRFEGSEFNVLNKNDINSILRSPKKKKNYHKR.

Position 3 is a phosphoserine (S3). 2 consecutive transmembrane segments (helical) span residues 145-165 (FTIFILLSLNLYVSCKFMFGY) and 237-257 (IPTNFIINLFVSFSPTAIVFL). The segment at 416–457 (SSNENLEKGGAFLPNQDQNRPSKSLSPLRKTPLSARQKRFEG) is disordered. S417 bears the Phosphoserine mark. Residues 430–440 (NQDQNRPSKSL) are compositionally biased toward polar residues. A Phosphoserine modification is found at S474.

It belongs to the NUR1 family. Interacts with CSM1.

The protein localises to the nucleus membrane. Its function is as follows. Member of a perinuclear network that controls recombination at multiple loci to maintain genome stability. Required for rDNA repeat stability. The polypeptide is Nuclear rim protein 1 (NUR1) (Saccharomyces cerevisiae (strain JAY291) (Baker's yeast)).